The following is a 571-amino-acid chain: Potassium-transporting ATPase potassium-binding subunit (571 aa).

11 consecutive transmembrane segments (helical) span residues 5-25 (GWTQITLYGAVVLALVKPLGW), 64-84 (LGYAGALLLFHVFGFLVLYAI), 136-156 (GLTHQNFLSAATGIAVAVALI), 178-198 (ILYVLLPICILYTLFLVWQGI), 254-274 (LSNFVQMVSIFAIGAALTNVF), 285-305 (WAILAAMGALFLAGVAVAYWA), 330-350 (FDIAASALFAVVTTAASCGAV), 357-379 (FTALGGMIPLVNMQLGEVIIGGV), 421-441 (MLGILCLPLMMLGFTALATVL), 488-508 (LAVGMLVGRFFVIIPALAIAG), and 527-547 (GALFVGLLVGVILIIGGLTFF).

Belongs to the KdpA family. As to quaternary structure, the system is composed of three essential subunits: KdpA, KdpB and KdpC.

The protein resides in the cell inner membrane. In terms of biological role, part of the high-affinity ATP-driven potassium transport (or Kdp) system, which catalyzes the hydrolysis of ATP coupled with the electrogenic transport of potassium into the cytoplasm. This subunit binds the periplasmic potassium ions and delivers the ions to the membrane domain of KdpB through an intramembrane tunnel. The protein is Potassium-transporting ATPase potassium-binding subunit of Methylobacterium nodulans (strain LMG 21967 / CNCM I-2342 / ORS 2060).